We begin with the raw amino-acid sequence, 344 residues long: L-rhamnose-proton symporter (344 aa).

The next 10 helical transmembrane spans lie at 4 to 24, 38 to 58, 72 to 92, 101 to 121, 131 to 151, 175 to 195, 214 to 234, 259 to 279, 290 to 310, and 323 to 343; these read AITM…CFYA, WSVG…ATLL, TLLP…NYGL, MGIG…TPII, TQGG…VGIV, LLLA…MNAA, LPSY…FCFI, LLLS…YAWG, MSWM…GLVL, and VLSL…LGMA.

The protein belongs to the L-rhamnose transporter (TC 2.A.7.6) family.

Its subcellular location is the cell inner membrane. The enzyme catalyses L-rhamnopyranose(in) + H(+)(in) = L-rhamnopyranose(out) + H(+)(out). Uptake of L-rhamnose across the cytoplasmic membrane with the concomitant transport of protons into the cell (symport system). This Klebsiella pneumoniae (strain 342) protein is L-rhamnose-proton symporter.